Here is a 278-residue protein sequence, read N- to C-terminus: RsbT co-antagonist protein RsbRD (278 aa).

Positions 160 to 271 (SAPIMPITDG…QSLAKALANK (112 aa)) constitute an STAS domain. T181 bears the Phosphothreonine mark.

Probably present in the stressosome with RsbRA, RsbRB, RsbRC and RsbS. In terms of processing, phosphorylated by RsbT.

Functionally, one of 4 functionally non-identical RsbR paralogs, it functions in the environmental signaling branch of the general stress response. In terms of biological role, negative regulator of sigma-B activity. Non-phosphorylated RsbS binds to RsbT, preventing its association with RsbU. Requires any one of RsbRA, RsbRB, RsbRC or RsbRD to sequester RsbT. When RsbS and the RsbR paralog(s) are phosphorylated, they release RsbT, which can then bind and activate RsbU. This chain is RsbT co-antagonist protein RsbRD (rsbRD), found in Bacillus subtilis (strain 168).